Here is a 458-residue protein sequence, read N- to C-terminus: tRNA modification GTPase MnmE (458 aa).

(6S)-5-formyl-5,6,7,8-tetrahydrofolate is bound by residues Arg-26, Glu-88, and Arg-127. In terms of domain architecture, TrmE-type G spans Gly-224–Phe-378. Asn-234 serves as a coordination point for K(+). Residues Asn-234–Ser-239, Thr-253–Thr-259, and Asp-278–Gly-281 each bind GTP. Position 238 (Ser-238) interacts with Mg(2+). K(+) is bound by residues Thr-253, Ile-255, and Thr-258. Thr-259 contacts Mg(2+). Residue Lys-458 coordinates (6S)-5-formyl-5,6,7,8-tetrahydrofolate.

This sequence belongs to the TRAFAC class TrmE-Era-EngA-EngB-Septin-like GTPase superfamily. TrmE GTPase family. In terms of assembly, homodimer. Heterotetramer of two MnmE and two MnmG subunits. K(+) serves as cofactor.

The protein resides in the cytoplasm. In terms of biological role, exhibits a very high intrinsic GTPase hydrolysis rate. Involved in the addition of a carboxymethylaminomethyl (cmnm) group at the wobble position (U34) of certain tRNAs, forming tRNA-cmnm(5)s(2)U34. In Streptococcus pyogenes serotype M5 (strain Manfredo), this protein is tRNA modification GTPase MnmE.